Consider the following 216-residue polypeptide: GTP cyclohydrolase 1 (216 aa).

The Zn(2+) site is built by C109, H112, and C180.

Belongs to the GTP cyclohydrolase I family. In terms of assembly, toroid-shaped homodecamer, composed of two pentamers of five dimers.

The enzyme catalyses GTP + H2O = 7,8-dihydroneopterin 3'-triphosphate + formate + H(+). Its pathway is cofactor biosynthesis; 7,8-dihydroneopterin triphosphate biosynthesis; 7,8-dihydroneopterin triphosphate from GTP: step 1/1. The sequence is that of GTP cyclohydrolase 1 from Wigglesworthia glossinidia brevipalpis.